A 241-amino-acid chain; its full sequence is Uridylate kinase (241 aa).

15-18 is a binding site for ATP; that stretch reads KLSG. A UMP-binding site is contributed by Gly-57. ATP is bound by residues Gly-58 and Arg-62. UMP contacts are provided by residues Asp-77 and 139 to 146; that span reads IGHTLFTT. ATP is bound by residues Thr-166, Asn-167, Phe-172, and Asp-175.

Belongs to the UMP kinase family. Homohexamer.

Its subcellular location is the cytoplasm. It catalyses the reaction UMP + ATP = UDP + ADP. It functions in the pathway pyrimidine metabolism; CTP biosynthesis via de novo pathway; UDP from UMP (UMPK route): step 1/1. Inhibited by UTP. Its function is as follows. Catalyzes the reversible phosphorylation of UMP to UDP. This Wigglesworthia glossinidia brevipalpis protein is Uridylate kinase.